A 211-amino-acid chain; its full sequence is Thymidylate kinase (211 aa).

ATP is bound at residue 10 to 17 (GIDGSGKT).

This sequence belongs to the thymidylate kinase family.

It carries out the reaction dTMP + ATP = dTDP + ADP. In terms of biological role, phosphorylation of dTMP to form dTDP in both de novo and salvage pathways of dTTP synthesis. The chain is Thymidylate kinase from Prochlorococcus marinus (strain NATL1A).